Reading from the N-terminus, the 273-residue chain is Putative phosphoenolpyruvate synthase regulatory protein (273 aa).

153–160 (AVSRAGKT) is an ADP binding site.

This sequence belongs to the pyruvate, phosphate/water dikinase regulatory protein family. PSRP subfamily.

It carries out the reaction [pyruvate, water dikinase] + ADP = [pyruvate, water dikinase]-phosphate + AMP + H(+). The catalysed reaction is [pyruvate, water dikinase]-phosphate + phosphate + H(+) = [pyruvate, water dikinase] + diphosphate. Its function is as follows. Bifunctional serine/threonine kinase and phosphorylase involved in the regulation of the phosphoenolpyruvate synthase (PEPS) by catalyzing its phosphorylation/dephosphorylation. The protein is Putative phosphoenolpyruvate synthase regulatory protein of Xanthomonas axonopodis pv. citri (strain 306).